We begin with the raw amino-acid sequence, 968 residues long: Ribonuclease E (968 aa).

The S1 motif domain occupies 39-119; the sequence is SNIYKGKITR…GTKGAALTTF (81 aa). Mg(2+) contacts are provided by Asp303 and Asp346. Zn(2+) is bound by residues Cys404 and Cys407. Positions 404–407 are required for zinc-mediated homotetramerization and catalytic activity; that stretch reads CPRC. Residues 947–968 are disordered; it reads IKNSAGAHSATNFSTSPVKKSE. Over residues 955-968 the composition is skewed to polar residues; that stretch reads SATNFSTSPVKKSE.

This sequence belongs to the RNase E/G family. RNase E subfamily. As to quaternary structure, component of the RNA degradosome, which is a multiprotein complex involved in RNA processing and mRNA degradation. Within the RNA degradosome, RNase E assembles into a homotetramer formed by a dimer of dimers. It depends on Zn(2+) as a cofactor. Requires Mg(2+) as cofactor.

The protein localises to the cytoplasm. Its subcellular location is the cell inner membrane. It carries out the reaction Endonucleolytic cleavage of single-stranded RNA in A- and U-rich regions.. Its function is as follows. Endoribonuclease that plays a central role in RNA processing and decay. Required for the maturation of 5S and 16S rRNAs and the majority of tRNAs. Also involved in the degradation of most mRNAs. This chain is Ribonuclease E, found in Buchnera aphidicola subsp. Schizaphis graminum (strain Sg).